Reading from the N-terminus, the 347-residue chain is NADH-ubiquinone oxidoreductase chain 2 (347 aa).

11 helical membrane passes run 3–23 (PMTS…VLMS), 25–45 (HWFM…PILM), 59–79 (YFLT…INLM), 96–116 (TLIT…FWVP), 122–142 (VSLS…LSLL), 149–169 (INTN…GWGG), 178–198 (IMAY…IYNP), 200–220 (LSLL…MLLI), 240–260 (ITTM…LTGF), 274–294 (NSVI…FFYM), and 326–346 (MTML…FISL).

Belongs to the complex I subunit 2 family. Core subunit of respiratory chain NADH dehydrogenase (Complex I) which is composed of 45 different subunits. Interacts with TMEM242.

It localises to the mitochondrion inner membrane. The catalysed reaction is a ubiquinone + NADH + 5 H(+)(in) = a ubiquinol + NAD(+) + 4 H(+)(out). Functionally, core subunit of the mitochondrial membrane respiratory chain NADH dehydrogenase (Complex I) which catalyzes electron transfer from NADH through the respiratory chain, using ubiquinone as an electron acceptor. Essential for the catalytic activity and assembly of complex I. In Sylvisorex granti (Grant's forest shrew), this protein is NADH-ubiquinone oxidoreductase chain 2.